The following is a 94-amino-acid chain: Small ubiquitin-related modifier 3 (94 aa).

A Glycyl lysine isopeptide (Lys-Gly) (interchain with G-Cter in SUMO) cross-link involves residue K11. The region spanning 15–92 (DHINLKVAGQ…IDVFQQQTGG (78 aa)) is the Ubiquitin-like domain. G92 is covalently cross-linked (Glycyl lysine isopeptide (Gly-Lys) (interchain with K-? in acceptor proteins)). The propeptide occupies 93-94 (VC).

It belongs to the ubiquitin family. SUMO subfamily. As to quaternary structure, interacts with sae2 and ube2i. Covalently attached to a number of proteins. Polymeric chains can be formed through Lys-11 cross-linking. In terms of processing, cleavage of precursor form by a sentrin-specific protease is necessary for function.

Its subcellular location is the cytoplasm. The protein resides in the nucleus. It localises to the PML body. Functionally, ubiquitin-like protein which can be covalently attached to target lysines either as a monomer or as a lysine-linked polymer. Does not seem to be involved in protein degradation and may function as an antagonist of ubiquitin in the degradation process. Plays a role in a number of cellular processes such as nuclear transport, DNA replication and repair, mitosis and signal transduction. Covalent attachment to its substrates requires prior activation by the E1 complex sae1-sae2 and linkage to the E2 enzyme ube2i. This chain is Small ubiquitin-related modifier 3 (sumo3), found in Xenopus laevis (African clawed frog).